Reading from the N-terminus, the 166-residue chain is MSYTPQQHRVNKKLGECLAIANQHFSREFPCPTVTYKLRGKAAGKAYLQLNEIKLNQVLFSENEDAFINEVVPHELAHLITHQVFGRVRPHGNEWKYVMEKVFNVPARTTHSLEITSVQGKTFEYRCDCTTYPLSIRRHNKVIRNQSTYRCQQCQQTLAFTGLQLS.

A SprT-like domain is found at 21 to 160 (ANQHFSREFP…CQQCQQTLAF (140 aa)). Histidine 74 contacts Zn(2+). Glutamate 75 is a catalytic residue. Histidine 78 serves as a coordination point for Zn(2+).

The protein belongs to the SprT family. The cofactor is Zn(2+).

It is found in the cytoplasm. This is Protein SprT from Vibrio atlanticus (strain LGP32) (Vibrio splendidus (strain Mel32)).